Here is a 752-residue protein sequence, read N- to C-terminus: ATP-dependent RNA helicase DRS1 (752 aa).

Disordered regions lie at residues 1–61 and 119–223; these read MVVG…NLDE and GLVK…TEGD. Over residues 19–34 the composition is skewed to acidic residues; the sequence is DSEDDVPILDSSDDEK. The segment covering 40-51 has biased composition (basic residues); sequence TTKKRKGKNNKK. The segment covering 124–142 has biased composition (basic and acidic residues); sequence AHIDSKQEEETEKEKVEKE. 2 stretches are compositionally biased toward acidic residues: residues 167 to 191 and 200 to 209; these read NQSE…QEEM and DEIDEEDDSE. Ser-208 is modified (phosphoserine). Positions 231–259 match the Q motif motif; sequence ENFNSLSLSRPVLKGLASLGYVKPSPIQS. Residues 262 to 437 enclose the Helicase ATP-binding domain; the sequence is IPIALLGKDI…SLSLKKPVRI (176 aa). 275–282 contributes to the ATP binding site; that stretch reads AVTGSGKT. The DEAD box signature appears at 385–388; the sequence is DEAD. The Helicase C-terminal domain maps to 448-639; it reads KLTQEFVRIR…SMNDTIEDIL (192 aa). A coiled-coil region spans residues 621–667; the sequence is IEETNKLVESMNDTIEDILVEEKEEKEILRAEMQLRKGENMLKHKKE. The interval 673-752 is disordered; sequence RRTWFQSESD…NKKKGFKSRR (80 aa). Residues 694–705 are compositionally biased toward basic residues; sequence RNKKVTNSKKRK. The segment covering 722-734 has biased composition (basic and acidic residues); the sequence is TKTDRIADQERTF. A compositionally biased stretch (basic residues) spans 735 to 752; it reads KKQKSTNSNKKKGFKSRR.

It belongs to the DEAD box helicase family. DDX27/DRS1 subfamily. As to quaternary structure, interacts with RRP1 and associates with pre-ribosomal particles.

Its subcellular location is the nucleus. It localises to the nucleolus. It catalyses the reaction ATP + H2O = ADP + phosphate + H(+). Functionally, ATP-binding RNA helicase involved in ribosome assembly. This Saccharomyces cerevisiae (strain ATCC 204508 / S288c) (Baker's yeast) protein is ATP-dependent RNA helicase DRS1 (DRS1).